The sequence spans 394 residues: Hemagglutinin-esterase (394 aa).

The first 16 residues, 1–16, serve as a signal peptide directing secretion; it reads MARFIILFLLLAPVYS. Residues 17-347 are Extracellular-facing; the sequence is RLCLRNHPDT…NNRVDAIPPQ (331 aa). The active site involves S32. Residues 119–121 carry the Cell attachment site motif; the sequence is RGD. Active-site residues include D261 and H264. N-linked (GlcNAc...) asparagine; by host glycosylation occurs at N333. The tract at residues 335–358 is highly polymorphic region; the sequence is TDVNNRVDAIPPQLSNIFISMGVA. The helical transmembrane segment at 348 to 368 threads the bilayer; the sequence is LSNIFISMGVAGFGIALFLAG. Residues 369-394 are Cytoplasmic-facing; it reads WKACVWIAAFMYKSRGRNPPANLSVA.

It is found in the host membrane. It localises to the virion membrane. The enzyme catalyses N-acetyl-9-O-acetylneuraminate + H2O = N-acetylneuraminate + acetate + H(+). It catalyses the reaction N-acetyl-4-O-acetylneuraminate + H2O = N-acetylneuraminate + acetate + H(+). Its function is as follows. Performs attachment to host receptor thereby inducing virus particle entry into target cell. Binds specifically to 5-N-acetyl-4-O-acetyl neuraminic acid on host cells, which plays a major role in cell tropism of the virus. ALso mediates de-O-acetylation of N-acetyl-4-O-acetylneuraminic acid. This receptor-destroying activity is important for virus release as it probably helps preventing self-aggregation and ensures the efficient spread of the progeny virus from cell to cell. The highly polymorphic region (HPR) modulates the virulence in host. Catalyzes the removal of terminal sialic acid residues from viral and cellular glycoconjugates. The polypeptide is Hemagglutinin-esterase (Gadus morhua (Atlantic cod)).